The chain runs to 28 residues: Ranatuerin-2AVb (28 aa).

A disulfide bond links Cys-23 and Cys-28.

Expressed by the skin glands.

The protein resides in the secreted. Functionally, has antibacterial activity. The chain is Ranatuerin-2AVb from Rana arvalis (Moor frog).